The sequence spans 506 residues: Xaa-Pro aminopeptidase 3 (506 aa).

The transit peptide at 1-31 (MPSLLSTPKLAPVLARLRGLSGCMSCLQRRY) directs the protein to the mitochondrion. An interaction with TNFRSF1B region spans residues 54–79 (HPHLLRPGEVTPGLSQVEYALRRHKL). 7 residues coordinate substrate: Tyr-300, Asp-331, Asp-342, His-423, His-430, Glu-450, and Glu-474. The Mn(2+) site is built by Asp-331, Asp-342, and His-423. Residues Glu-450 and Glu-474 each contribute to the Mn(2+) site.

The protein belongs to the peptidase M24B family. In terms of assembly, homodimer. Interacts with TNFRSF1B/TNFR2 (activated) and TRAF2. Mn(2+) serves as cofactor. Expressed in brain, kidney, heart, liver, skeletal muscle and testis.

It localises to the mitochondrion. The protein localises to the cytoplasm. It catalyses the reaction Release of any N-terminal amino acid, including proline, that is linked to proline, even from a dipeptide or tripeptide.. Functionally, catalyzes the removal of a penultimate prolyl residue from the N-termini of peptides, such as Leu-Pro-Ala. Also shows low activity towards peptides with Ala or Ser at the P1 position. Promotes TNFRSF1B-mediated phosphorylation of MAPK8/JNK1 and MAPK9/JNK2, suggesting a function as an adapter protein for TNFRSF1B; the effect is independent of XPNPEP3 peptidase activity. May inhibit apoptotic cell death induced via TNF-TNFRSF1B signaling. The protein is Xaa-Pro aminopeptidase 3 (Xpnpep3) of Mus musculus (Mouse).